The sequence spans 852 residues: Lon protease homolog 2, peroxisomal (852 aa).

Ser-2 carries the N-acetylserine modification. One can recognise a Lon N-terminal domain in the interval 13-222; that stretch reads LPLLLTHEGV…MTIPLLVRQI (210 aa). Position 375–382 (375–382) interacts with ATP; sequence GPPGVGKT. One can recognise a Lon proteolytic domain in the interval 651–837; it reads LSQPGVAIGL…DEVLNAAFDG (187 aa). Active-site residues include Ser-743 and Lys-786. Residues 850 to 852 carry the Microbody targeting signal motif; that stretch reads SKL.

This sequence belongs to the peptidase S16 family. Interacts with PEX5. Interacts with TYSND1. May interact with enzymes involved in beta-oxidation of fatty acids, including ACOX1/AOX. In terms of tissue distribution, widely expressed, with high levels in the liver, kidney and pancreas.

Its subcellular location is the peroxisome matrix. The enzyme catalyses Hydrolysis of proteins in presence of ATP.. Its function is as follows. ATP-dependent serine protease that mediates the selective degradation of misfolded and unassembled polypeptides in the peroxisomal matrix. Necessary for type 2 peroxisome targeting signal (PTS2)-containing protein processing and facilitates peroxisome matrix protein import. May indirectly regulate peroxisomal fatty acid beta-oxidation through degradation of the self-processed forms of TYSND1. This Homo sapiens (Human) protein is Lon protease homolog 2, peroxisomal.